We begin with the raw amino-acid sequence, 1113 residues long: Receptor-type guanylate cyclase gcy-18 (1113 aa).

Residues 1 to 18 (MLKTLLFILIFFNIPIIA) form the signal peptide. The Extracellular segment spans residues 19 to 499 (IEEIPDIKEN…RGQRCSYLLE (481 aa)). N-linked (GlcNAc...) asparagine glycans are attached at residues Asn72, Asn369, and Asn456. A helical transmembrane segment spans residues 500–520 (ISVGSLIILLILISVVFFFLF). Residues 521-1113 (RYCENKQLEK…TNYIQNVEGV (593 aa)) are Cytoplasmic-facing. Positions 543–848 (IDEEQVKSMM…RVRLNTEMVL (306 aa)) constitute a Protein kinase domain. Positions 853–884 (SLVDQMMKMMEQYANNLEKLVAERTGMLEEAN) form a coiled coil. In terms of domain architecture, Guanylate cyclase spans 918–1048 (TILFSDIVGF…DTVNVSSRME (131 aa)). Mg(2+) contacts are provided by Asp923, Ile924, and Asp967.

It belongs to the adenylyl cyclase class-4/guanylyl cyclase family. In terms of tissue distribution, expressed specifically in AFD sensory neurons.

It is found in the cell membrane. Its subcellular location is the cell projection. It localises to the cilium. It catalyses the reaction GTP = 3',5'-cyclic GMP + diphosphate. Its function is as follows. Guanylate cyclase involved in the production of the second messenger cGMP. Regulates thermotaxis responses in AFD sensory neurons. May regulate AFD neuronal activity such as calcium responses to temperature gradients. The chain is Receptor-type guanylate cyclase gcy-18 from Caenorhabditis elegans.